Consider the following 73-residue polypeptide: Putative membrane protein insertion efficiency factor (73 aa).

It belongs to the UPF0161 family.

The protein resides in the cell inner membrane. Functionally, could be involved in insertion of integral membrane proteins into the membrane. In Parabacteroides distasonis (strain ATCC 8503 / DSM 20701 / CIP 104284 / JCM 5825 / NCTC 11152), this protein is Putative membrane protein insertion efficiency factor.